The primary structure comprises 1088 residues: V-type proton ATPase catalytic subunit A (1088 aa).

Residue 257–264 participates in ATP binding; that stretch reads GAFGCGKT. The 178-residue stretch at 485–662 folds into the DOD-type homing endonuclease domain; that stretch reads LLGTWAGIGN…LVKIAHSLGI (178 aa).

Belongs to the ATPase alpha/beta chains family. As to quaternary structure, V-ATPase is a heteromultimeric enzyme composed of a peripheral catalytic V1 complex (components A to H) attached to an integral membrane V0 proton pore complex (components: a, c, c', c'', d, e, f and VOA1). Post-translationally, this protein undergoes a protein self splicing that involves a post-translational excision of the VDE intervening region (intein) followed by peptide ligation.

It localises to the vacuole membrane. The enzyme catalyses ATP + H2O + 4 H(+)(in) = ADP + phosphate + 5 H(+)(out). Functionally, catalytic subunit of the V1 complex of vacuolar(H+)-ATPase (V-ATPase), a multisubunit enzyme composed of a peripheral complex (V1) that hydrolyzes ATP and a membrane integral complex (V0) that translocates protons. V-ATPase is responsible for acidifying and maintaining the pH of intracellular compartments. In terms of biological role, VDE is an endonuclease that can cleave at a site present in a VMA1 allele that lacks the derived endonuclease segment of the open reading frame; cleavage at this site only occurs during meiosis and initiates 'homing', a genetic event that converts a VMA1 allele lacking VDE into one that contains it. The protein is V-type proton ATPase catalytic subunit A (VMA1) of Candida tropicalis (Yeast).